Here is a 198-residue protein sequence, read N- to C-terminus: Nucleoside triphosphate pyrophosphatase (198 aa).

Asp75 serves as the catalytic Proton acceptor.

Belongs to the Maf family. The cofactor is a divalent metal cation.

It localises to the cytoplasm. It catalyses the reaction a ribonucleoside 5'-triphosphate + H2O = a ribonucleoside 5'-phosphate + diphosphate + H(+). It carries out the reaction a 2'-deoxyribonucleoside 5'-triphosphate + H2O = a 2'-deoxyribonucleoside 5'-phosphate + diphosphate + H(+). Functionally, nucleoside triphosphate pyrophosphatase. May have a dual role in cell division arrest and in preventing the incorporation of modified nucleotides into cellular nucleic acids. The sequence is that of Nucleoside triphosphate pyrophosphatase from Hyphomonas neptunium (strain ATCC 15444).